The following is a 91-amino-acid chain: Non-specific lipid-transfer protein P5 (91 aa).

Disulfide bonds link cysteine 3–cysteine 50, cysteine 13–cysteine 27, cysteine 28–cysteine 73, and cysteine 48–cysteine 87.

The protein resides in the secreted. Plant non-specific lipid-transfer proteins transfer phospholipids as well as galactolipids across membranes. May play a role in wax or cutin deposition in the cell walls of expanding epidermal cells and certain secretory tissues. This chain is Non-specific lipid-transfer protein P5, found in Vitis sp. (Grape).